A 113-amino-acid polypeptide reads, in one-letter code: Large ribosomal subunit protein uL22 (113 aa).

Belongs to the universal ribosomal protein uL22 family. Part of the 50S ribosomal subunit.

Its function is as follows. This protein binds specifically to 23S rRNA; its binding is stimulated by other ribosomal proteins, e.g. L4, L17, and L20. It is important during the early stages of 50S assembly. It makes multiple contacts with different domains of the 23S rRNA in the assembled 50S subunit and ribosome. In terms of biological role, the globular domain of the protein is located near the polypeptide exit tunnel on the outside of the subunit, while an extended beta-hairpin is found that lines the wall of the exit tunnel in the center of the 70S ribosome. The chain is Large ribosomal subunit protein uL22 from Geobacillus kaustophilus (strain HTA426).